Here is a 374-residue protein sequence, read N- to C-terminus: GTPase Obg (374 aa).

Residues 1 to 159 form the Obg domain; it reads MKFIDEVRIH…RDLRLELRLL (159 aa). The OBG-type G domain maps to 160-333; the sequence is ADVGLLGLPN…LVYAIWQALP (174 aa). GTP contacts are provided by residues 166–173, 191–195, 213–216, 283–286, and 314–316; these read GLPNAGKS, FTTLY, DIPG, NKSD, and SAA. Mg(2+) contacts are provided by Ser-173 and Thr-193. A disordered region spans residues 337 to 374; sequence PAADPTQTEDWGDESDAGERLENWEGDDLDADWEEEQV. Over residues 360–374 the composition is skewed to acidic residues; it reads WEGDDLDADWEEEQV.

It belongs to the TRAFAC class OBG-HflX-like GTPase superfamily. OBG GTPase family. As to quaternary structure, monomer. Mg(2+) serves as cofactor.

It localises to the cytoplasm. In terms of biological role, an essential GTPase which binds GTP, GDP and possibly (p)ppGpp with moderate affinity, with high nucleotide exchange rates and a fairly low GTP hydrolysis rate. Plays a role in control of the cell cycle, stress response, ribosome biogenesis and in those bacteria that undergo differentiation, in morphogenesis control. This is GTPase Obg from Acidithiobacillus ferrooxidans (strain ATCC 23270 / DSM 14882 / CIP 104768 / NCIMB 8455) (Ferrobacillus ferrooxidans (strain ATCC 23270)).